Here is a 124-residue protein sequence, read N- to C-terminus: MKSAFKSEFPFEKRKAESERIVQKFHNRIPVICERGGKSDIPDIDKRKYLVPGDLTVGQFVYVIRKRIKLPAEKAIFIFVNDTLPPTAALMSSIYQHHKDKDGFLYVSYSSENTFGGAGPLLEK.

Glycine 116 carries Phosphatidylethanolamine amidated glycine lipidation. Positions 117 to 124 (GAGPLLEK) are cleaved as a propeptide — removed in mature form.

The protein belongs to the ATG8 family. Conjugation to phosphatidylethanolamine (PE) leads to homodimerization. Interacts with ATG1, ATG3, ATG4, ATG7 and ATG12. In terms of processing, the C-terminal 8 residues of ATG8 are removed by ATG4 to expose Gly-116 at the C-terminus. This Gly-116 forms then a thioester bond with the 'Cys-550' of ATG7 (E1-like activating enzyme) before being transferred to the 'Cys-244' of ATG3 (the specific E2 conjugating enzyme), in order to be finally amidated with phosphatidylethanolamine. This lipid modification anchors ATG8 to membranes and can be reversed by ATG4, releasing soluble ATG8.

It is found in the cytoplasmic vesicle. The protein resides in the cvt vesicle membrane. Its subcellular location is the autophagosome membrane. It localises to the vacuole membrane. In terms of biological role, ubiquitin-like modifier involved in cytoplasm to vacuole transport (Cvt) vesicles and autophagosome formation. With ATG4, mediates the delivery of the vesicles and autophagosomes to the vacuole via the microtubule cytoskeleton. Required for selective autophagic degradation of the nucleus (nucleophagy) as well as for mitophagy which contributes to regulate mitochondrial quantity and quality by eliminating the mitochondria to a basal level to fulfill cellular energy requirements and preventing excess ROS production. Also participates in membrane fusion events that take place in the early secretory pathway. Also involved in endoplasmic reticulum-specific autophagic process and is essential for the survival of cells subjected to severe ER stress. The ATG8-PE conjugate mediates tethering between adjacent membranes and stimulates membrane hemifusion, leading to expansion of the autophagosomal membrane during autophagy. Moreover not only conjugation, but also subsequent ATG8-PE deconjugation is an important step required to facilitate multiple events during macroautophagy, and especially for efficient autophagosome biogenesis, the assembly of ATG9-containing tubulovesicular clusters into phagophores/autophagosomes, and for the disassembly of PAS-associated ATG components. This Kluyveromyces marxianus (strain DMKU3-1042 / BCC 29191 / NBRC 104275) (Yeast) protein is Autophagy-related protein 8.